A 139-amino-acid chain; its full sequence is Large-conductance mechanosensitive channel (139 aa).

2 helical membrane passes run 16-36 (VIDL…VKSL) and 79-99 (GAFV…FLLV).

It belongs to the MscL family. Homopentamer.

It localises to the cell inner membrane. In terms of biological role, channel that opens in response to stretch forces in the membrane lipid bilayer. May participate in the regulation of osmotic pressure changes within the cell. The protein is Large-conductance mechanosensitive channel of Caulobacter vibrioides (strain ATCC 19089 / CIP 103742 / CB 15) (Caulobacter crescentus).